The following is a 437-amino-acid chain: Cobyrinate a,c-diamide synthase (437 aa).

The 190-residue stretch at 241 to 430 (KIAVAKDEAF…AHVHFFGNLD (190 aa)) folds into the GATase cobBQ-type domain. Cysteine 323 acts as the Nucleophile in catalysis.

It belongs to the CobB/CbiA family. Mg(2+) serves as cofactor.

It catalyses the reaction cob(II)yrinate + 2 L-glutamine + 2 ATP + 2 H2O = cob(II)yrinate a,c diamide + 2 L-glutamate + 2 ADP + 2 phosphate + 2 H(+). The protein operates within cofactor biosynthesis; adenosylcobalamin biosynthesis; cob(II)yrinate a,c-diamide from sirohydrochlorin (anaerobic route): step 10/10. Catalyzes the ATP-dependent amidation of the two carboxylate groups at positions a and c of cobyrinate, using either L-glutamine or ammonia as the nitrogen source. This chain is Cobyrinate a,c-diamide synthase, found in Clostridium acetobutylicum (strain ATCC 824 / DSM 792 / JCM 1419 / IAM 19013 / LMG 5710 / NBRC 13948 / NRRL B-527 / VKM B-1787 / 2291 / W).